Consider the following 341-residue polypeptide: UDP-N-acetyl-alpha-D-glucosaminouronate 4-epimerase (341 aa).

Phenylalanine 27, isoleucine 28, aspartate 47, alanine 50, threonine 51, glycine 52, aspartate 78, isoleucine 79, and glutamine 98 together coordinate NAD(+). UDP-N-acetyl-alpha-D-galactosamine is bound at residue serine 103. Residue threonine 117 coordinates NAD(+). Serine 142, serine 143, and tyrosine 166 together coordinate UDP-N-acetyl-alpha-D-galactosamine. NAD(+) is bound by residues tyrosine 166 and lysine 170. The Proton acceptor role is filled by tyrosine 166. Asparagine 195 serves as a coordination point for UDP-N-acetyl-alpha-D-galactosamine. Residue valine 196 participates in NAD(+) binding. 6 residues coordinate UDP-N-acetyl-alpha-D-galactosamine: valine 210, tyrosine 225, asparagine 227, arginine 234, arginine 299, and aspartate 302.

This sequence belongs to the NAD(P)-dependent epimerase/dehydratase family. In terms of assembly, homodimer. NAD(+) is required as a cofactor.

It catalyses the reaction UDP-2-acetamido-2-deoxy-alpha-D-glucuronate = UDP-2-acetamido-2-deoxy-alpha-D-galacturonate. It carries out the reaction UDP-N-acetyl-alpha-D-glucosamine = UDP-N-acetyl-alpha-D-galactosamine. The protein operates within bacterial outer membrane biogenesis; LPS O-antigen biosynthesis. Epimerase required for the biosynthesis of the B-band O antigen of serotype O6 lipopolysaccharide. Catalyzes the reversible epimerization of UDP-N-acetylglucosaminuronic acid (UDP-GlcNAcA) to UDP-N-acetylgalactosaminuronic acid (UDP-GalNAcA). Also catalyzes the reversible epimerization of UDP-N-acetylglucosamine (UDP-GlcNAc) to UDP-N-acetylgalactosamine (UDP-GalNAc). Has very low epimerase activity with UDP-glucose (UDP-Glc) and UDP-galactose (UDP-Gal). The polypeptide is UDP-N-acetyl-alpha-D-glucosaminouronate 4-epimerase (Pseudomonas aeruginosa).